A 488-amino-acid chain; its full sequence is pH-response regulator protein palC (488 aa).

Residues 2 to 430 (PPYLYRLPTT…TVAFQPVPPV (429 aa)) form the BRO1 domain. The tract at residues 449 to 488 (PPPSKFSPSRIGHLNEEQGNDSPELGETEDTSYAGKGNYF) is disordered.

Belongs to the palC family.

Its function is as follows. Required for the proteolytic cleavage of the transcription factor RIM101 in response to alkaline ambient pH. This Cryptococcus neoformans var. neoformans serotype D (strain B-3501A) (Filobasidiella neoformans) protein is pH-response regulator protein palC.